Here is a 412-residue protein sequence, read N- to C-terminus: NADH-quinone oxidoreductase subunit 4 (412 aa).

This sequence belongs to the complex I 49 kDa subunit family. In terms of assembly, NDH-1 is composed of at least 14 different subunits, Nqo1 to Nqo14. The complex has a L-shaped structure, with the hydrophobic arm (subunits Nqo7, Nqo8, Nqo10 to Nqo14) embedded in the inner membrane and the hydrophilic peripheral arm (subunits Nqo1 to Nqo6, Nqo9) protruding into the bacterial cytoplasm. The hydrophilic domain contains all the redox centers.

The protein localises to the cell inner membrane. The catalysed reaction is a quinone + NADH + 5 H(+)(in) = a quinol + NAD(+) + 4 H(+)(out). Functionally, NDH-1 shuttles electrons from NADH, via FMN and iron-sulfur (Fe-S) centers, to quinones in the respiratory chain. The immediate electron acceptor for the enzyme in this species is believed to be ubiquinone. Couples the redox reaction to proton translocation (for every two electrons transferred, four hydrogen ions are translocated across the cytoplasmic membrane), and thus conserves the redox energy in a proton gradient. The chain is NADH-quinone oxidoreductase subunit 4 (nqo4) from Paracoccus denitrificans.